Reading from the N-terminus, the 828-residue chain is Chitin synthase 7 (828 aa).

Transmembrane regions (helical) follow at residues 17-37 (VIVG…VAAF), 57-77 (AVVV…IMVV), 95-115 (VGLQ…PWLF), 444-464 (FMQN…LAIL), 473-493 (LPVG…IYFG), and 501-521 (IWLY…YMVY). N-linked (GlcNAc...) asparagine glycosylation is present at Asn-615. Composition is skewed to low complexity over residues 740 to 752 (SLVS…SNSN) and 813 to 822 (SNNDPNNSNS). Disordered stretches follow at residues 740–780 (SLVS…LGRA) and 793–828 (LEIG…HQQR). The N-linked (GlcNAc...) asparagine glycan is linked to Asn-818.

This sequence belongs to the chitin synthase family. Class VII subfamily.

Its subcellular location is the membrane. The enzyme catalyses [(1-&gt;4)-N-acetyl-beta-D-glucosaminyl](n) + UDP-N-acetyl-alpha-D-glucosamine = [(1-&gt;4)-N-acetyl-beta-D-glucosaminyl](n+1) + UDP + H(+). Its function is as follows. Polymerizes chitin, a structural polymer of the cell wall and septum, by transferring the sugar moiety of UDP-GlcNAc to the non-reducing end of the growing chitin polymer. Required for normal appressorial chitin content and for the normal formation and function of these infection structures. The sequence is that of Chitin synthase 7 from Pyricularia oryzae (strain 70-15 / ATCC MYA-4617 / FGSC 8958) (Rice blast fungus).